The primary structure comprises 338 residues: Anthranilate phosphoribosyltransferase (338 aa).

5-phospho-alpha-D-ribose 1-diphosphate contacts are provided by residues Gly80, 83-84, Thr88, 90-93, 108-116, and Ser120; these read GD, NIST, and KHGNRAMSS. Gly80 serves as a coordination point for anthranilate. Ser92 serves as a coordination point for Mg(2+). Residue Asn111 participates in anthranilate binding. Arg166 contributes to the anthranilate binding site. The Mg(2+) site is built by Asp225 and Glu226.

It belongs to the anthranilate phosphoribosyltransferase family. As to quaternary structure, homodimer. Mg(2+) is required as a cofactor.

It carries out the reaction N-(5-phospho-beta-D-ribosyl)anthranilate + diphosphate = 5-phospho-alpha-D-ribose 1-diphosphate + anthranilate. It participates in amino-acid biosynthesis; L-tryptophan biosynthesis; L-tryptophan from chorismate: step 2/5. Functionally, catalyzes the transfer of the phosphoribosyl group of 5-phosphorylribose-1-pyrophosphate (PRPP) to anthranilate to yield N-(5'-phosphoribosyl)-anthranilate (PRA). This is Anthranilate phosphoribosyltransferase from Herpetosiphon aurantiacus (strain ATCC 23779 / DSM 785 / 114-95).